Consider the following 404-residue polypeptide: Dihydrolipoyllysine-residue acetyltransferase component of pyruvate dehydrogenase complex (404 aa).

Residues 2–78 (PIKILMPALS…PVNSLIAVLS (77 aa)) form the Lipoyl-binding domain. The residue at position 43 (K43) is an N6-lipoyllysine. One can recognise a Peripheral subunit-binding (PSBD) domain in the interval 128–165 (FASPLAKRLAKIRNIRLESVQGSGPHGRIVKQDILSYS). Residue H377 is part of the active site.

It belongs to the 2-oxoacid dehydrogenase family. Forms a 24-polypeptide structural core with octahedral symmetry. (R)-lipoate serves as cofactor.

It carries out the reaction N(6)-[(R)-dihydrolipoyl]-L-lysyl-[protein] + acetyl-CoA = N(6)-[(R)-S(8)-acetyldihydrolipoyl]-L-lysyl-[protein] + CoA. The pyruvate dehydrogenase complex catalyzes the overall conversion of pyruvate to acetyl-CoA and CO(2). It contains multiple copies of three enzymatic components: pyruvate dehydrogenase (E1), dihydrolipoamide acetyltransferase (E2) and lipoamide dehydrogenase (E3). This chain is Dihydrolipoyllysine-residue acetyltransferase component of pyruvate dehydrogenase complex (pdhC), found in Rickettsia typhi (strain ATCC VR-144 / Wilmington).